Reading from the N-terminus, the 263-residue chain is Dihydropteroate synthase type-3 (263 aa).

Residues 2–257 enclose the Pterin-binding domain; that stretch reads SKIFGIVNIT…DVKSLSDALK (256 aa). Mg(2+) is bound at residue N9. S49 is a 4-aminobenzoate binding site. The (7,8-dihydropterin-6-yl)methyl diphosphate site is built by D82, N101, and D172. 6-hydroxymethyl-7,8-dihydropterin-binding residues include N101 and D172. 4-aminobenzoate is bound at residue F177. (7,8-dihydropterin-6-yl)methyl diphosphate is bound at residue K211. K211 lines the 6-hydroxymethyl-7,8-dihydropterin pocket. Residue S212 participates in 4-aminobenzoate binding. Position 245–247 (245–247) interacts with (7,8-dihydropterin-6-yl)methyl diphosphate; that stretch reads RTH.

This sequence belongs to the DHPS family. It depends on Mg(2+) as a cofactor.

The catalysed reaction is (7,8-dihydropterin-6-yl)methyl diphosphate + 4-aminobenzoate = 7,8-dihydropteroate + diphosphate. The protein operates within cofactor biosynthesis; tetrahydrofolate biosynthesis; 7,8-dihydrofolate from 2-amino-4-hydroxy-6-hydroxymethyl-7,8-dihydropteridine diphosphate and 4-aminobenzoate: step 1/2. Catalyzes the condensation of para-aminobenzoate (pABA) with 6-hydroxymethyl-7,8-dihydropterin diphosphate (DHPt-PP) to form 7,8-dihydropteroate (H2Pte), the immediate precursor of folate derivatives. Confers resistance to sulfonamide antibiotics, including sulfamethoxazole (SMX), sulfadiazine and sulfisoxazole. This Escherichia coli protein is Dihydropteroate synthase type-3.